Here is a 70-residue protein sequence, read N- to C-terminus: Large ribosomal subunit protein uL29 (70 aa).

The protein belongs to the universal ribosomal protein uL29 family.

In Clostridium novyi (strain NT), this protein is Large ribosomal subunit protein uL29.